The following is a 346-amino-acid chain: Peroxidase 9 (346 aa).

Residues 1-23 (MAISKLIPTLVLFVLFSFDVSVA) form the signal peptide. 4 disulfides stabilise this stretch: Cys54/Cys134, Cys87/Cys92, Cys140/Cys342, and Cys219/Cys251. The active-site Proton acceptor is the His85. Residues Asp86, Val89, Gly91, Asp93, and Ser95 each contribute to the Ca(2+) site. Pro182 contacts substrate. The N-linked (GlcNAc...) asparagine glycan is linked to Asn185. His212 is a binding site for heme b. A Ca(2+)-binding site is contributed by Thr213. 3 residues coordinate Ca(2+): Asp264, Ser267, and Asp272.

The protein belongs to the peroxidase family. Classical plant (class III) peroxidase subfamily. Heme b serves as cofactor. It depends on Ca(2+) as a cofactor.

It localises to the secreted. It carries out the reaction 2 a phenolic donor + H2O2 = 2 a phenolic radical donor + 2 H2O. Removal of H(2)O(2), oxidation of toxic reductants, biosynthesis and degradation of lignin, suberization, auxin catabolism, response to environmental stresses such as wounding, pathogen attack and oxidative stress. These functions might be dependent on each isozyme/isoform in each plant tissue. This chain is Peroxidase 9 (PER9), found in Arabidopsis thaliana (Mouse-ear cress).